Reading from the N-terminus, the 107-residue chain is Nucleoid-associated protein A1G_07310 (107 aa).

It belongs to the YbaB/EbfC family. Homodimer.

It localises to the cytoplasm. The protein resides in the nucleoid. Binds to DNA and alters its conformation. May be involved in regulation of gene expression, nucleoid organization and DNA protection. This Rickettsia rickettsii (strain Sheila Smith) protein is Nucleoid-associated protein A1G_07310.